We begin with the raw amino-acid sequence, 357 residues long: Peptide chain release factor 1 (357 aa).

Q233 is modified (N5-methylglutamine). The interval 284 to 305 (RSASISADRKSQVGTGDRSERI) is disordered.

Belongs to the prokaryotic/mitochondrial release factor family. Post-translationally, methylated by PrmC. Methylation increases the termination efficiency of RF1.

Its subcellular location is the cytoplasm. In terms of biological role, peptide chain release factor 1 directs the termination of translation in response to the peptide chain termination codons UAG and UAA. This chain is Peptide chain release factor 1, found in Clostridium novyi (strain NT).